The chain runs to 164 residues: Ubiquitin-fold modifier-conjugating enzyme 1 (164 aa).

Residue Cys-116 is the Glycyl thioester intermediate of the active site.

This sequence belongs to the ubiquitin-conjugating enzyme family. UFC1 subfamily.

Functionally, E2-like enzyme which forms an intermediate with UFM1 via a thioester linkage. The chain is Ubiquitin-fold modifier-conjugating enzyme 1 from Drosophila persimilis (Fruit fly).